Here is a 218-residue protein sequence, read N- to C-terminus: MSFFDSYRKKMQMPSKEEVLPGRVQPIPTAAAHFVSGHPLKGPWPDGMKQVLFGMGCFWGAERLFWQVPGVYVTAVGYAGGITPNPTYEETCTGLTGHAEVVLVVYDPKVVTLNELLALFWEEHDPTQGMRQGNDIGTTYRSVIYTFNAVDRAVAEKSRDAYSQALASRGLGPVTTQITDAPDFYYAEDYHQQYLAKNPDGYCGLRGTGVSCPIPLAH.

The active site involves C57.

This sequence belongs to the MsrA Met sulfoxide reductase family.

The catalysed reaction is L-methionyl-[protein] + [thioredoxin]-disulfide + H2O = L-methionyl-(S)-S-oxide-[protein] + [thioredoxin]-dithiol. The enzyme catalyses [thioredoxin]-disulfide + L-methionine + H2O = L-methionine (S)-S-oxide + [thioredoxin]-dithiol. Functionally, has an important function as a repair enzyme for proteins that have been inactivated by oxidation. Catalyzes the reversible oxidation-reduction of methionine sulfoxide in proteins to methionine. In Brucella melitensis biotype 1 (strain ATCC 23456 / CCUG 17765 / NCTC 10094 / 16M), this protein is Peptide methionine sulfoxide reductase MsrA.